The following is a 287-amino-acid chain: AA9 family lytic polysaccharide monooxygenase D (287 aa).

Positions 1-17 (MKLSLLAAAAIAPMVSA) are cleaved as a signal peptide. Residue H18 participates in Cu(2+) binding. Cysteines 67 and 189 form a disulfide. Position 176 (H176) interacts with O2. Y186 is a Cu(2+) binding site. 2 N-linked (GlcNAc...) asparagine glycosylation sites follow: N220 and N250. The segment at 239 to 287 (TGGSGSSTGSYNESNAEDSNEYPYQKESGTCQSNFYRREHARDFSHRRA) is disordered. Positions 274–287 (YRREHARDFSHRRA) are enriched in basic and acidic residues.

It belongs to the polysaccharide monooxygenase AA9 family. It depends on Cu(2+) as a cofactor.

It localises to the secreted. It carries out the reaction [(1-&gt;4)-beta-D-glucosyl]n+m + reduced acceptor + O2 = 4-dehydro-beta-D-glucosyl-[(1-&gt;4)-beta-D-glucosyl]n-1 + [(1-&gt;4)-beta-D-glucosyl]m + acceptor + H2O.. Its function is as follows. Lytic polysaccharide monooxygenase (LPMO) that depolymerizes crystalline and amorphous polysaccharides via the oxidation of scissile alpha- or beta-(1-4)-glycosidic bonds, yielding C1 oxidation products. Catalysis by LPMOs requires the reduction of the active-site copper from Cu(II) to Cu(I) by a reducing agent and H(2)O(2) or O(2) as a cosubstrate. Active on celluloseas as well as on the hemicellulose xyloglucan. Shows synergy with other hydrolases in degrading sorghum stover. The protein is AA9 family lytic polysaccharide monooxygenase D of Emericella nidulans (strain FGSC A4 / ATCC 38163 / CBS 112.46 / NRRL 194 / M139) (Aspergillus nidulans).